The sequence spans 185 residues: Large ribosomal subunit protein bL25 (185 aa).

The protein belongs to the bacterial ribosomal protein bL25 family. CTC subfamily. In terms of assembly, part of the 50S ribosomal subunit; part of the 5S rRNA/L5/L18/L25 subcomplex. Contacts the 5S rRNA. Binds to the 5S rRNA independently of L5 and L18.

Functionally, this is one of the proteins that binds to the 5S RNA in the ribosome where it forms part of the central protuberance. The protein is Large ribosomal subunit protein bL25 of Laribacter hongkongensis (strain HLHK9).